An 89-amino-acid polypeptide reads, in one-letter code: Small ribosomal subunit protein uS15 (89 aa).

This sequence belongs to the universal ribosomal protein uS15 family. Part of the 30S ribosomal subunit. Forms a bridge to the 50S subunit in the 70S ribosome, contacting the 23S rRNA.

Functionally, one of the primary rRNA binding proteins, it binds directly to 16S rRNA where it helps nucleate assembly of the platform of the 30S subunit by binding and bridging several RNA helices of the 16S rRNA. In terms of biological role, forms an intersubunit bridge (bridge B4) with the 23S rRNA of the 50S subunit in the ribosome. The polypeptide is Small ribosomal subunit protein uS15 (Gloeothece citriformis (strain PCC 7424) (Cyanothece sp. (strain PCC 7424))).